A 357-amino-acid chain; its full sequence is NADH-quinone oxidoreductase subunit H (357 aa).

8 consecutive transmembrane segments (helical) span residues 26 to 46, 92 to 112, 127 to 147, 164 to 184, 203 to 223, 259 to 279, 294 to 314, and 329 to 349; these read LVKI…LTLW, ALFV…WAVI, LLFV…AGWA, MISY…VTGS, GLTF…IYII, FFLA…LMFL, VPGW…FIWF, and LGWK…AIWM.

The protein belongs to the complex I subunit 1 family. In terms of assembly, NDH-1 is composed of 14 different subunits. Subunits NuoA, H, J, K, L, M, N constitute the membrane sector of the complex.

The protein resides in the cell inner membrane. The enzyme catalyses a quinone + NADH + 5 H(+)(in) = a quinol + NAD(+) + 4 H(+)(out). In terms of biological role, NDH-1 shuttles electrons from NADH, via FMN and iron-sulfur (Fe-S) centers, to quinones in the respiratory chain. The immediate electron acceptor for the enzyme in this species is believed to be ubiquinone. Couples the redox reaction to proton translocation (for every two electrons transferred, four hydrogen ions are translocated across the cytoplasmic membrane), and thus conserves the redox energy in a proton gradient. This subunit may bind ubiquinone. The polypeptide is NADH-quinone oxidoreductase subunit H (Janthinobacterium sp. (strain Marseille) (Minibacterium massiliensis)).